The sequence spans 203 residues: Outer-membrane lipoprotein carrier protein (203 aa).

An N-terminal signal peptide occupies residues 1 to 21 (MKKLLVACCLLSGLISAHALA).

It belongs to the LolA family. As to quaternary structure, monomer.

The protein resides in the periplasm. Its function is as follows. Participates in the translocation of lipoproteins from the inner membrane to the outer membrane. Only forms a complex with a lipoprotein if the residue after the N-terminal Cys is not an aspartate (The Asp acts as a targeting signal to indicate that the lipoprotein should stay in the inner membrane). This chain is Outer-membrane lipoprotein carrier protein, found in Yersinia enterocolitica serotype O:8 / biotype 1B (strain NCTC 13174 / 8081).